The following is a 93-amino-acid chain: uncharacterized protein (93 aa).

A coiled-coil region spans residues 36–69; sequence SEERLLSRLFEEMDELREAVEKEDWENLRDELLD.

This is an uncharacterized protein from Archaeoglobus fulgidus (strain ATCC 49558 / DSM 4304 / JCM 9628 / NBRC 100126 / VC-16).